Here is a 528-residue protein sequence, read N- to C-terminus: Serine/threonine-protein kinase akt-2 (528 aa).

The PH domain occupies 12 to 115 (DIVIESWLHK…WIEAIQAVSS (104 aa)). Residues 121-153 (ENAGNTSMQEEDTNGNPSGESDVNMDATSTRSD) are disordered. Residues 123–153 (AGNTSMQEEDTNGNPSGESDVNMDATSTRSD) show a composition bias toward polar residues. Positions 180-437 (FDFLKVLGQG…AREVSRAEFF (258 aa)) constitute a Protein kinase domain. Residues 186–194 (LGQGTFGKV) and K209 contribute to the ATP site. Catalysis depends on D303, which acts as the Proton acceptor. The AGC-kinase C-terminal domain maps to 438 to 515 (KDVDWEATLR…YYVSGSLERS (78 aa)).

This sequence belongs to the protein kinase superfamily. AGC Ser/Thr protein kinase family. RAC subfamily. Interacts with pdk-1, sgk-1, akt-1 and daf-16. Part of a complex containing sgk-1, akt-1 and akt-2. It depends on Mg(2+) as a cofactor. Expressed in neurons, muscle cells of the pharynx, rectal gland cells, and spermatheca.

It catalyses the reaction L-seryl-[protein] + ATP = O-phospho-L-seryl-[protein] + ADP + H(+). The enzyme catalyses L-threonyl-[protein] + ATP = O-phospho-L-threonyl-[protein] + ADP + H(+). Phosphorylated and activated by pdk-1. In terms of biological role, acts downstream of PI3 kinase age-1 and kinase pdk-1 in the daf-2/insulin receptor-like transduction pathway. Essential role in regulating developmental arrest at the dauer stage. Phosphorylates Forkhead-related daf-16 and the longevity-promoting skn-1 transcription factors, which inhibits their entry into the nucleus and antagonizes their functions. Role in immune function and pathogen resistance. Downstream of age-1 and together with akt-1 and sgk-1, promotes cell survival during embryonic development. Plays a role in maintaining the gonadal basement membrane through antagonizing akt-1 activity. This chain is Serine/threonine-protein kinase akt-2, found in Caenorhabditis elegans.